The chain runs to 287 residues: tRNA N(3)-cytidine methyltransferase METTL6 (287 aa).

Residues Trp45, Tyr49, Gly87, Asp110, Asp136, Leu137, and Ile157 each coordinate S-adenosyl-L-methionine. The interval 267–287 is disordered; it reads RKPPKDPAPTTDSASLLRKEF.

The protein belongs to the methyltransferase superfamily. METL family. Monomer. Interacts with SARS1/SerRS; interaction is mediated via tRNA(Ser) and is required for N(3)-methylcytidine methylation.

It is found in the cytoplasm. Its subcellular location is the nucleus. The enzyme catalyses cytidine(32) in tRNA(Ser) + S-adenosyl-L-methionine = N(3)-methylcytidine(32) in tRNA(Ser) + S-adenosyl-L-homocysteine + H(+). In terms of biological role, S-adenosyl-L-methionine-dependent methyltransferase that mediates N(3)-methylcytidine modification of residue 32 of the tRNA anticodon loop of tRNA(Ser), including tRNA(Ser)(UGA) and tRNA(Ser)(GCU). Interaction with SARS1/SerRS is required for N(3)-methylcytidine methylation. The chain is tRNA N(3)-cytidine methyltransferase METTL6 (Mettl6) from Rattus norvegicus (Rat).